We begin with the raw amino-acid sequence, 273 residues long: Gap junction beta-5 protein (273 aa).

At 1–20 the chain is on the cytoplasmic side; sequence MNWSIFEGLLSGVNKYSTAF. A helical membrane pass occupies residues 21–40; the sequence is GRIWLSLVFIFRVLVYLVTA. The Extracellular portion of the chain corresponds to 41 to 75; sequence ERVWSDDHKDFDCNTRQPGCSNVCFDEFFPVSHVR. Residues 76–98 form a helical membrane-spanning segment; that stretch reads LWALQLILVTCPSLLVVMHVAYR. Topologically, residues 99-126 are cytoplasmic; that stretch reads EVQEKRHREAHGENSGRLYLNPGKKRGG. The helical transmembrane segment at 127-149 threads the bilayer; the sequence is LWWTYVCSLVFKASVDIAFLYVF. Residues 150 to 187 are Extracellular-facing; sequence HSFYPKYILPPVVKCHADPCPNIVDCFISKPSEKNIFT. The chain crosses the membrane as a helical span at residues 188–210; it reads LFMVATAAICILLNLVELIYLVS. The Cytoplasmic portion of the chain corresponds to 211–273; that stretch reads KRCHECLAAR…PRDHVKKTIL (63 aa).

It belongs to the connexin family. Beta-type (group I) subfamily. As to quaternary structure, a connexon is composed of a hexamer of connexins.

The protein localises to the cell membrane. Its subcellular location is the cell junction. The protein resides in the gap junction. One gap junction consists of a cluster of closely packed pairs of transmembrane channels, the connexons, through which materials of low MW diffuse from one cell to a neighboring cell. The chain is Gap junction beta-5 protein (GJB5) from Homo sapiens (Human).